Here is a 27-residue protein sequence, read N- to C-terminus: Cysteine-rich venom protein tropirin (27 aa).

This sequence belongs to the CRISP family. Post-translationally, contains 8 disulfide bonds. In terms of tissue distribution, expressed by the venom gland.

The protein resides in the secreted. Its function is as follows. Blocks contraction of smooth muscle elicited by high potassium-induced depolarization, but does not block caffeine-stimulated contraction. May target voltage-gated calcium channels on smooth muscle. The polypeptide is Cysteine-rich venom protein tropirin (Tropidechis carinatus (Australian rough-scaled snake)).